A 1342-amino-acid chain; its full sequence is Zinc finger protein 335 (1342 aa).

2 disordered regions span residues 1–102 and 201–228; these read MEEN…VTGG and TSTS…AEEP. A compositionally biased stretch (low complexity) spans 34–49; the sequence is AVSADSSDAAAAPGQA. The span at 201–217 shows a compositional bias: polar residues; it reads TSTSTCLEAQGGPSSPV. Residues 245 to 268 form a C2H2-type 1 zinc finger; it reads FKCKMCQYRSSTKATLLRHMRERH. The tract at residues 274–442 is disordered; the sequence is AAAAAAGKKG…TLPRRRGRPS (169 aa). A compositionally biased stretch (acidic residues) spans 297–327; the sequence is EEGPEEEDDDDIVDAGAIDDLEEDSDYNPAE. Over residues 346-357 the composition is skewed to basic residues; the sequence is RPRRRPGRPRKL. 8 C2H2-type zinc fingers span residues 465–487, 495–517, 523–545, 562–584, 590–612, 621–643, 649–672, and 678–701; these read FLCR…VNSH, FKCL…MFNH, YKCD…AAVH, FPCP…MKTH, HMCD…LLTH, FKCE…QLSH, FKCS…AVKH, and FACE…RCRH. Disordered regions lie at residues 732–763 and 964–1013; these read LKQQ…QSSE and CGGL…SAAT. Over residues 740–753 the composition is skewed to pro residues; it reads PGPPPSSPGPPEIP. Phosphoserine occurs at positions 976, 992, and 1007. Low complexity predominate over residues 986-997; sequence SQSSASSPPATS. 4 C2H2-type zinc fingers span residues 1019-1041, 1047-1069, 1075-1097, and 1103-1126; these read FSCK…KRAH, FKCP…MAQH, HQCS…MLTH, and FACH…QRLH. Residue K1022 forms a Glycyl lysine isopeptide (Lys-Gly) (interchain with G-Cter in SUMO2) linkage. Residues 1041–1342 are involved in the interaction with CCAR2; that stretch reads HAGPGAFKCP…EYDVITLADD (302 aa). Residue S1153 is modified to Phosphoserine.

Belongs to the krueppel C2H2-type zinc-finger protein family. In terms of assembly, interacts with NCOA6; may enhance ligand-dependent transcriptional activation by nuclear hormone receptors. Interacts with CNOT6. Interacts with CNOT9; the interaction is direct. Component of a nuclear receptor-mediated transcription complex composed of at least ZNF335, CCAR2 and EMSY; the complex stimulates the transcription of nuclear receptor target genes such as SOX9 and HOXA1. Within the complex interacts with EMSY and interacts (via C-terminus) with CCAR2. Interacts with members of histone H3'Lys4'(H3K4) methyltransferase complexes ASH2L, CXXC1, KMT2A/MLL1, RBBP5, SETD1A and WDR5. Component of a histone methylation complex composed of at least ZNF335, RBBP5, ASH2L and WDR5; the complex may have histone H3-specific methyltransferase activity, however does not have specificity for 'Lys-4' of histone H3. Interacts with RBBP5 and WDR5. Interacts with ASHL2. Components of this complex may associate with components of the ZNF335-CCAR2-EMSY nuclear receptor-mediated transcription complex to form a complex at least composed of ZNF335, HCFC1, CCAR2, EMSY, MKI67, RBBP5, ASH2L and WDR5. Within this complex also interacts with HCFC1 and MKI67. Ubiquitously expressed.

The protein resides in the nucleus. Component or associated component of some histone methyltransferase complexes may regulate transcription through recruitment of those complexes on gene promoters. Enhances ligand-dependent transcriptional activation by nuclear hormone receptors. Plays an important role in neural progenitor cell proliferation and self-renewal through the regulation of specific genes involved brain development, including REST. Also controls the expression of genes involved in somatic development and regulates, for instance, lymphoblast proliferation. The sequence is that of Zinc finger protein 335 (ZNF335) from Homo sapiens (Human).